A 463-amino-acid polypeptide reads, in one-letter code: RuvB-like 2 (463 aa).

Residue A2 is modified to N-acetylalanine. K9 participates in a covalent cross-link: Glycyl lysine isopeptide (Lys-Gly) (interchain with G-Cter in SUMO2). ATP is bound at residue 77 to 84 (GQPGTGKT). The residue at position 437 (S437) is a Phosphoserine. Residues K444 and K456 each participate in a glycyl lysine isopeptide (Lys-Gly) (interchain with G-Cter in SUMO2) cross-link.

The protein belongs to the RuvB family. Forms homohexameric rings. Can form a dodecamer with RUVBL1 made of two stacked hexameric rings; however, even though RUVBL1 and RUVBL2 are present in equimolar ratio, the oligomeric status of each hexamer is not known. Oligomerization may regulate binding to nucleic acids and conversely, binding to nucleic acids may affect the dodecameric assembly. Interaction of the complex with DHX34 results in conformational changes of the N-terminus of the RUVBL2 subunits, resulting in loss of nucleotide binding ability and ATP hydrolysis of the complex. Interacts with the transcriptional activation domain of MYC. Interacts with ATF2. Component of the RNA polymerase II holoenzyme complex. May also act to bridge the LEF1/TCF1-CTNNB1 complex and TBP. Component of the NuA4 histone acetyltransferase complex which contains the catalytic subunit KAT5/TIP60 and the subunits EP400, TRRAP/PAF400, BRD8/SMAP, EPC1, DMAP1/DNMAP1, RUVBL1/TIP49, RUVBL2, ING3, actin, ACTL6A/BAF53A, MORF4L1/MRG15, MORF4L2/MRGX, MRGBP, YEATS4/GAS41, VPS72/YL1 and MEAF6. The NuA4 complex interacts with MYC and the adenovirus E1A protein. RUVBL2 interacts with EP400. Component of a NuA4-related complex which contains EP400, TRRAP/PAF400, SRCAP, BRD8/SMAP, EPC1, DMAP1/DNMAP1, RUVBL1/TIP49, RUVBL2, actin, ACTL6A/BAF53A, VPS72 and YEATS4/GAS41. Interacts with NPAT. Component of the chromatin-remodeling INO80 complex; specifically part of a complex module associated with the helicase ATP-binding and the helicase C-terminal domain of INO80. Component of some MLL1/MLL complex, at least composed of the core components KMT2A/MLL1, ASH2L, HCFC1/HCF1, WDR5 and RBBP5, as well as the facultative components BACC1, CHD8, E2F6, HSP70, INO80C, KANSL1, LAS1L, MAX, MCRS1, MGA, MYST1/MOF, PELP1, PHF20, PRP31, RING2, RUVB1/TIP49A, RUVB2/TIP49B, SENP3, TAF1, TAF4, TAF6, TAF7, TAF9 and TEX10. Interacts with IGHMBP2. Interacts with TELO2. Interacts with HINT1. Component of a SWR1-like complex. Component of the R2TP complex composed at least of RUVBL1, RUVBL2, RPAP3 and PIHD1. Component of the PAQosome complex which is responsible for the biogenesis of several protein complexes and which consists of R2TP complex members RUVBL1, RUVBL2, RPAP3 and PIH1D1, URI complex members PFDN2, PFDN6, PDRG1, UXT and URI1 as well as ASDURF, POLR2E and DNAAF10/WDR92. Interacts with ITFG1. Interacts with ZMYND10. Interacts with WAC; WAC positively regulates MTOR activity by promoting the assembly of the TTT complex composed of TELO2, TTI1 and TTI2 and the RUVBL complex composed of RUVBL1 and RUVBL2 into the TTT-RUVBL complex which leads to the dimerization of the mTORC1 complex and its subsequent activation. Forms a complex with APPL1 and APPL2. Interacts with ZNHIT2 (via HIT-type zinc finger) in the presence of ATP or ADP; shows a stronger interaction in the presence of ADP. The RUVBL1/RUVBL2 complex interacts with ZNHIT1 (via HIT-type zinc finger), ZNHIT3 (via HIT-type zinc finger), ZNHIT6 (via HIT-type zinc finger) and DDX59/ZNHIT5 (via HIT-type zinc finger) in the presence of ADP. Interacts with NOPCHAP1; the interaction is direct and disrupted upon ATP binding. Interacts with SMG1. In terms of assembly, (Microbial infection) Interacts with Mumps L polymerase; this interaction regulates the viral transcription. In terms of tissue distribution, ubiquitously expressed. Highly expressed in testis and thymus.

It localises to the nucleus matrix. The protein resides in the nucleus. Its subcellular location is the nucleoplasm. It is found in the cytoplasm. The protein localises to the membrane. It localises to the dynein axonemal particle. It carries out the reaction ATP + H2O = ADP + phosphate + H(+). Functionally, possesses single-stranded DNA-stimulated ATPase and ATP-dependent DNA helicase (5' to 3') activity; hexamerization is thought to be critical for ATP hydrolysis and adjacent subunits in the ring-like structure contribute to the ATPase activity. Component of the NuA4 histone acetyltransferase complex which is involved in transcriptional activation of select genes principally by acetylation of nucleosomal histones H4 and H2A. This modification may both alter nucleosome -DNA interactions and promote interaction of the modified histones with other proteins which positively regulate transcription. This complex may be required for the activation of transcriptional programs associated with oncogene and proto-oncogene mediated growth induction, tumor suppressor mediated growth arrest and replicative senescence, apoptosis, and DNA repair. The NuA4 complex ATPase and helicase activities seem to be, at least in part, contributed by the association of RUVBL1 and RUVBL2 with EP400. NuA4 may also play a direct role in DNA repair when recruited to sites of DNA damage. Component of a SWR1-like complex that specifically mediates the removal of histone H2A.Z/H2AZ1 from the nucleosome. Proposed core component of the chromatin remodeling INO80 complex which exhibits DNA- and nucleosome-activated ATPase activity and catalyzes ATP-dependent nucleosome sliding. Plays an essential role in oncogenic transformation by MYC and also modulates transcriptional activation by the LEF1/TCF1-CTNNB1 complex. May also inhibit the transcriptional activity of ATF2. Involved in the endoplasmic reticulum (ER)-associated degradation (ERAD) pathway where it negatively regulates expression of ER stress response genes. May play a role in regulating the composition of the U5 snRNP complex. This is RuvB-like 2 (RUVBL2) from Homo sapiens (Human).